Consider the following 212-residue polypeptide: Lipid A acyltransferase PagP (212 aa).

The N-terminal stretch at 1–24 (MYLKRTLITLSLITLPIVPFLSYA) is a signal peptide. Over residues 36–47 (NLAPVTVDSSDP) the composition is skewed to polar residues. A disordered region spans residues 36-56 (NLAPVTVDSSDPVSDKQGESW). Residues His84, Asp127, and Ser128 contribute to the active site.

It belongs to the lipid A palmitoyltransferase family. In terms of assembly, homodimer.

Its subcellular location is the cell outer membrane. It carries out the reaction a lipid A + a 1,2-diacyl-sn-glycero-3-phosphocholine = a hepta-acyl lipid A + a 2-acyl-sn-glycero-3-phosphocholine. The enzyme catalyses a lipid IVA + a 1,2-diacyl-sn-glycero-3-phosphocholine = a lipid IVB + a 2-acyl-sn-glycero-3-phosphocholine. It catalyses the reaction a lipid IIA + a 1,2-diacyl-sn-glycero-3-phosphocholine = a lipid IIB + a 2-acyl-sn-glycero-3-phosphocholine. Its function is as follows. Transfers a fatty acid residue from the sn-1 position of a phospholipid to the N-linked hydroxyfatty acid chain on the proximal unit of lipid A or its precursors. The protein is Lipid A acyltransferase PagP of Pectobacterium carotovorum subsp. carotovorum (strain PC1).